The sequence spans 436 residues: 3-ketoacyl-CoA thiolase (436 aa).

The Acyl-thioester intermediate role is filled by Cys-99. Active-site proton acceptor residues include His-392 and Cys-422.

This sequence belongs to the thiolase-like superfamily. Thiolase family. In terms of assembly, heterotetramer of two alpha chains (FadJ) and two beta chains (FadI).

The protein resides in the cytoplasm. It catalyses the reaction an acyl-CoA + acetyl-CoA = a 3-oxoacyl-CoA + CoA. The protein operates within lipid metabolism; fatty acid beta-oxidation. Catalyzes the final step of fatty acid oxidation in which acetyl-CoA is released and the CoA ester of a fatty acid two carbons shorter is formed. The chain is 3-ketoacyl-CoA thiolase from Shewanella piezotolerans (strain WP3 / JCM 13877).